Reading from the N-terminus, the 293-residue chain is 4-hydroxy-tetrahydrodipicolinate synthase (293 aa).

Residue Thr-50 participates in pyruvate binding. Tyr-138 acts as the Proton donor/acceptor in catalysis. Residue Lys-166 is the Schiff-base intermediate with substrate of the active site. Pyruvate is bound at residue Val-206.

Belongs to the DapA family. As to quaternary structure, homotetramer; dimer of dimers.

It is found in the cytoplasm. It carries out the reaction L-aspartate 4-semialdehyde + pyruvate = (2S,4S)-4-hydroxy-2,3,4,5-tetrahydrodipicolinate + H2O + H(+). Its pathway is amino-acid biosynthesis; L-lysine biosynthesis via DAP pathway; (S)-tetrahydrodipicolinate from L-aspartate: step 3/4. Its function is as follows. Catalyzes the condensation of (S)-aspartate-beta-semialdehyde [(S)-ASA] and pyruvate to 4-hydroxy-tetrahydrodipicolinate (HTPA). This is 4-hydroxy-tetrahydrodipicolinate synthase from Cutibacterium acnes (strain DSM 16379 / KPA171202) (Propionibacterium acnes).